The following is a 508-amino-acid chain: Cyclin-A1-1 (508 aa).

A compositionally biased stretch (low complexity) spans 1–28; that stretch reads MSSNLAASRRSSSSSSVAAAAAAKRPAV. Disordered stretches follow at residues 1–40 and 82–125; these read MSSN…GKAA and VKKG…ESVL. Positions 29–39 are enriched in gly residues; that stretch reads GEGGGGGGGKA. The span at 98–111 shows a compositional bias: low complexity; that stretch reads ASAVKSASAKPAPA.

It belongs to the cyclin family. Cyclin AB subfamily. In terms of tissue distribution, expressed in the dividing region of the root cap and root apex. Expressed in the intercalary meristem of internodes and in adventitious roots under submergence conditions.

Its function is as follows. Involved in the control of the cell cycle at the G2/M (mitosis) transition. In Oryza sativa subsp. japonica (Rice), this protein is Cyclin-A1-1 (CYCA1-1).